Reading from the N-terminus, the 133-residue chain is Exosome complex protein C1739.07 (133 aa).

The disordered stretch occupies residues 96-133 (VNPKTEAVNTSNAAISSSSSNRPKVAKDAATRIIKHHT). The span at 102-116 (AVNTSNAAISSSSSN) shows a compositional bias: low complexity.

It belongs to the C1D family. Component of the exosome multienzyme ribonuclease complex. Interacts with cut3.

The protein localises to the cytoplasm. The protein resides in the nucleus. Functionally, required for exosome-dependent processing of pre-rRNA and small nucleolar RNA (snRNA) precursors. Involved in processing of 35S pre-rRNA at the A0, A1 and A2 sites. This is Exosome complex protein C1739.07 from Schizosaccharomyces pombe (strain 972 / ATCC 24843) (Fission yeast).